The primary structure comprises 385 residues: GDSL esterase/lipase At5g08460 (385 aa).

Residues 1–35 (MHDSEIFKFKDMMMMSCTVQTLVLVPWFLVVFVLA) form the signal peptide. Serine 56 functions as the Nucleophile in the catalytic mechanism. 2 N-linked (GlcNAc...) asparagine glycosylation sites follow: asparagine 218 and asparagine 285. Catalysis depends on residues aspartate 350 and histidine 353. N-linked (GlcNAc...) asparagine glycosylation is found at asparagine 368 and asparagine 378.

Belongs to the 'GDSL' lipolytic enzyme family.

It localises to the secreted. This is GDSL esterase/lipase At5g08460 from Arabidopsis thaliana (Mouse-ear cress).